The following is a 305-amino-acid chain: D-alanine--D-alanine ligase (305 aa).

An ATP-grasp domain is found at 107–299 (KVIFASAGLK…FGELVLRILQ (193 aa)). Position 134–185 (134–185 (PLPVVVKPSREGSSVGVGIVRDPSRMQAALDEAFRYDSEILIEGFIDGREVQ)) interacts with ATP. Residues D253, E266, and N268 each coordinate Mg(2+).

Belongs to the D-alanine--D-alanine ligase family. Mg(2+) serves as cofactor. The cofactor is Mn(2+).

It localises to the cytoplasm. It carries out the reaction 2 D-alanine + ATP = D-alanyl-D-alanine + ADP + phosphate + H(+). It participates in cell wall biogenesis; peptidoglycan biosynthesis. Cell wall formation. In Citrifermentans bemidjiense (strain ATCC BAA-1014 / DSM 16622 / JCM 12645 / Bem) (Geobacter bemidjiensis), this protein is D-alanine--D-alanine ligase.